The sequence spans 749 residues: Pectate disaccharide-lyase (749 aa).

The first 26 residues, 1 to 26 (MKYAASGLLSVALNSLLLLGSNQRFA), serve as a signal peptide directing secretion. Ca(2+) contacts are provided by Asp-538, Asp-562, Asp-563, and Asp-566. Lys-595 acts as the Proton acceptor in catalysis.

Belongs to the polysaccharide lyase 9 family. It depends on Ca(2+) as a cofactor.

The protein resides in the secreted. It catalyses the reaction [(1-&gt;4)-alpha-D-galacturonosyl](n) = 4-(4-deoxy-alpha-D-galact-4-enuronosyl)-D-galacturonate + [(1-&gt;4)-alpha-D-galacturonosyl](n-2). With respect to regulation, activity on pectate is nearly completely inhibited by ethyleneglycol-bis-(P-aminoethyl ether) N,N'-tetraacetic acid (EGTA), EDTA or nitrilotriacetic acid. Activity is specifically restored by the addition of Ca(2+). Functionally, exo-cleaving lyase that catalyzes the digestion of pectate. Contributes to pectate catabolism but not to bacterial virulence. In vitro can also use citrus pectin and highly methyl-esterified Link pectin as substrates. The sequence is that of Pectate disaccharide-lyase from Dickeya chrysanthemi (Pectobacterium chrysanthemi).